A 1134-amino-acid chain; its full sequence is Protocadherin-18 (1134 aa).

The first 27 residues, 1–27, serve as a signal peptide directing secretion; that stretch reads MYQMNAKMHFTFVFALLVVSFNLDVLG. 6 Cadherin domains span residues 28–137, 138–246, 247–354, 361–465, 466–576, and 582–697; these read KNLK…SPQF, SRSL…SPAF, EQQS…KPEI, PGKE…PPHF, QRSR…VPVV, and RNNT…APLD. Topologically, residues 28–699 are extracellular; the sequence is KNLKYRIYEE…SVSQAPLDVS (672 aa). N103 carries an N-linked (GlcNAc...) asparagine glycan. N269 is a glycosylation site (N-linked (GlcNAc...) asparagine). N-linked (GlcNAc...) asparagine glycosylation occurs at N559. The chain crosses the membrane as a helical span at residues 700 to 720; sequence MIIIISLGAICAVLLVIMVLF. Topologically, residues 721–1134 are cytoplasmic; that stretch reads ATRCNREKKD…NKLLQDVRQS (414 aa). Disordered stretches follow at residues 768–800, 868–888, and 941–1003; these read TLPIRSHHRSSPSSSPTLERGQMGSRQSHNSHQ, SLKDSGRGDSEAGDSDYDLGR, and DYRS…TSSL. A compositionally biased stretch (polar residues) spans 791–800; sequence GSRQSHNSHQ. Residues 868-877 are compositionally biased toward basic and acidic residues; it reads SLKDSGRGDS. Residues 892 to 1134 are interaction with DAB1; the sequence is IDRLLGEGFS…NKLLQDVRQS (243 aa).

Interacts with DAB1.

The protein localises to the cell membrane. In terms of biological role, potential calcium-dependent cell-adhesion protein. The polypeptide is Protocadherin-18 (PCDH18) (Bos taurus (Bovine)).